We begin with the raw amino-acid sequence, 1009 residues long: Lateral signaling target protein 2 homolog (1009 aa).

Disordered stretches follow at residues 313-460 (PVGS…EEQL), 497-629 (ASED…KRCS), and 777-905 (MQRN…TATA). Low complexity-rich tracts occupy residues 327 to 348 (SSTPTTSSNNNNNNKSSSSSSG), 364 to 398 (QRNNNNNQQNSNESTTLPPRSPSMLSLSASSTPTA), and 406 to 427 (PSHSIASTTSSAASSNSTHPPA). Over residues 430–458 (SDGDDEDEDEEEDEEEDELEDTEDDTDEE) the composition is skewed to acidic residues. S541 carries the phosphoserine modification. Residues 544–558 (SEPHRDQGETIKSTE) show a composition bias toward basic and acidic residues. Over residues 562–575 (QQQQQQEQQTLQSS) the composition is skewed to low complexity. Composition is skewed to basic residues over residues 576–601 (RQRHSHSHSHSHRHHHRHHHHHHHST) and 609–627 (QPHHHQPHPHRLTRSGRKR). Low complexity predominate over residues 780–798 (NNTIDNPSSSNTSSSSATT). Position 807 is a phosphoserine (S807). Residues 822 to 878 (VHQQEQEMQQQQDHQQQQHQHQVQVQLQRQRNNSVGSNTPSSASSTSSSSEQNSPVS) are compositionally biased toward low complexity. The segment at 917 to 977 (DGKAPRCMSC…VCRDCYVREV (61 aa)) adopts an FYVE-type zinc-finger fold. C923, C926, C939, C942, C947, C950, C969, and C972 together coordinate Zn(2+).

This sequence belongs to the lst-2 family.

Its function is as follows. Negative regulator of epidermal growth factor receptor (EGFR) signaling. This is Lateral signaling target protein 2 homolog from Drosophila persimilis (Fruit fly).